Consider the following 146-residue polypeptide: Prolactin-inducible protein (146 aa).

The signal sequence occupies residues 1-28 (MRLLQLLFRASPATLLLVLCLQLGANKA). At Q29 the chain carries Pyrrolidone carboxylic acid. Cystine bridges form between C65–C91 and C89–C123. N-linked (GlcNAc...) asparagine glycosylation occurs at N105.

Belongs to the PIP family. Monomer. Interacts with AZGP1. In terms of tissue distribution, expressed in pathological conditions of the mammary gland and in several exocrine tissues, such as the lacrimal, salivary, and sweat glands.

It localises to the secreted. The chain is Prolactin-inducible protein (PIP) from Homo sapiens (Human).